Consider the following 24-residue polypeptide: uncharacterized protein (24 aa).

This is an uncharacterized protein from Saccharomyces cerevisiae (strain ATCC 204508 / S288c) (Baker's yeast).